We begin with the raw amino-acid sequence, 125 residues long: Small ribosomal subunit protein bS6 (125 aa).

The segment at 99–125 is disordered; that stretch reads ASPMVKAKDERRASAEVENNDFEDAEE. Positions 104–113 are enriched in basic and acidic residues; that stretch reads KAKDERRASA. Residues 116-125 show a composition bias toward acidic residues; the sequence is ENNDFEDAEE.

The protein belongs to the bacterial ribosomal protein bS6 family.

Its function is as follows. Binds together with bS18 to 16S ribosomal RNA. The chain is Small ribosomal subunit protein bS6 from Mannheimia succiniciproducens (strain KCTC 0769BP / MBEL55E).